A 501-amino-acid chain; its full sequence is ATP synthase subunit alpha (501 aa).

Position 169-176 (169-176 (GDRQTGKT)) interacts with ATP.

The protein belongs to the ATPase alpha/beta chains family. In terms of assembly, F-type ATPases have 2 components, CF(1) - the catalytic core - and CF(0) - the membrane proton channel. CF(1) has five subunits: alpha(3), beta(3), gamma(1), delta(1), epsilon(1). CF(0) has three main subunits: a(1), b(2) and c(9-12). The alpha and beta chains form an alternating ring which encloses part of the gamma chain. CF(1) is attached to CF(0) by a central stalk formed by the gamma and epsilon chains, while a peripheral stalk is formed by the delta and b chains.

Its subcellular location is the cell membrane. It carries out the reaction ATP + H2O + 4 H(+)(in) = ADP + phosphate + 5 H(+)(out). Its function is as follows. Produces ATP from ADP in the presence of a proton gradient across the membrane. The alpha chain is a regulatory subunit. In Streptococcus pneumoniae (strain 70585), this protein is ATP synthase subunit alpha.